We begin with the raw amino-acid sequence, 288 residues long: Acetyl-coenzyme A carboxylase carboxyl transferase subunit beta (288 aa).

The region spanning 34–288 (LFAKCPGCKQ…TLLSFHGGVQ (255 aa)) is the CoA carboxyltransferase N-terminal domain. Residues Cys38, Cys41, Cys56, and Cys59 each coordinate Zn(2+). Residues 38–59 (CPGCKQAIYQKDLGQAKICPNC) form a C4-type zinc finger.

It belongs to the AccD/PCCB family. Acetyl-CoA carboxylase is a heterohexamer composed of biotin carboxyl carrier protein (AccB), biotin carboxylase (AccC) and two subunits each of ACCase subunit alpha (AccA) and ACCase subunit beta (AccD). The cofactor is Zn(2+).

Its subcellular location is the cytoplasm. It catalyses the reaction N(6)-carboxybiotinyl-L-lysyl-[protein] + acetyl-CoA = N(6)-biotinyl-L-lysyl-[protein] + malonyl-CoA. It functions in the pathway lipid metabolism; malonyl-CoA biosynthesis; malonyl-CoA from acetyl-CoA: step 1/1. Its function is as follows. Component of the acetyl coenzyme A carboxylase (ACC) complex. Biotin carboxylase (BC) catalyzes the carboxylation of biotin on its carrier protein (BCCP) and then the CO(2) group is transferred by the transcarboxylase to acetyl-CoA to form malonyl-CoA. This Streptococcus thermophilus (strain CNRZ 1066) protein is Acetyl-coenzyme A carboxylase carboxyl transferase subunit beta.